We begin with the raw amino-acid sequence, 70 residues long: Disintegrin triflavin (70 aa).

Residues 1–70 (GEECDCGSPS…SADCPRWNGL (70 aa)) form the Disintegrin domain. Disulfide bonds link cysteine 4-cysteine 19, cysteine 6-cysteine 14, cysteine 13-cysteine 36, cysteine 27-cysteine 33, cysteine 32-cysteine 57, and cysteine 45-cysteine 64. The Cell attachment site signature appears at 49-51 (RGD).

It belongs to the venom metalloproteinase (M12B) family. P-II subfamily. P-IIa sub-subfamily. As to quaternary structure, monomer. In terms of tissue distribution, expressed by the venom gland.

Its subcellular location is the secreted. Inhibits fibrinogen interaction with platelets. Acts by binding to alpha-IIb/beta-3 (ITGA2B/ITGB3) on the platelet surface and inhibits aggregation induced by ADP, thrombin, platelet-activating factor and collagen. The sequence is that of Disintegrin triflavin from Protobothrops flavoviridis (Habu).